A 317-amino-acid chain; its full sequence is Melanocyte-stimulating hormone receptor (317 aa).

The Extracellular portion of the chain corresponds to Met-1–Glu-37. Asn-29 carries an N-linked (GlcNAc...) asparagine glycan. A helical membrane pass occupies residues Val-38–Ile-63. At Ala-64–Pro-72 the chain is on the cytoplasmic side. Residues Met-73–Leu-93 form a helical membrane-spanning segment. At Glu-94–Asn-118 the chain is on the extracellular side. A helical transmembrane segment spans residues Val-119 to Met-140. Topologically, residues Asp-141–Arg-163 are cytoplasmic. Residues Ile-164 to Tyr-183 traverse the membrane as a helical segment. Residues Asn-184–Cys-191 are Extracellular-facing. Residues Leu-192–Leu-211 traverse the membrane as a helical segment. The Cytoplasmic portion of the chain corresponds to Ala-212–Ala-240. Residues Ala-241–Leu-266 traverse the membrane as a helical segment. Residues Cys-267–Asn-279 are Extracellular-facing. A helical transmembrane segment spans residues Phe-280–Phe-300. Residues Arg-301–Trp-317 lie on the Cytoplasmic side of the membrane. Cys-315 carries S-palmitoyl cysteine lipidation.

Belongs to the G-protein coupled receptor 1 family. Interacts with MGRN1, but does not undergo MGRN1-mediated ubiquitination; this interaction competes with GNAS-binding and thus inhibits agonist-induced cAMP production. Interacts with OPN3; the interaction results in a decrease in MC1R-mediated cAMP signaling and ultimately a decrease in melanin production in melanocytes.

Its subcellular location is the cell membrane. Functionally, receptor for MSH (alpha, beta and gamma) and ACTH. The activity of this receptor is mediated by G proteins which activate adenylate cyclase. Mediates melanogenesis, the production of eumelanin (black/brown) and phaeomelanin (red/yellow), via regulation of cAMP signaling in melanocytes. This chain is Melanocyte-stimulating hormone receptor (MC1R), found in Alces alces alces (European moose).